A 461-amino-acid chain; its full sequence is Photosystem II CP43 reaction center protein (461 aa).

Residues M1–E2 constitute a propeptide that is removed on maturation. T3 bears the N-acetylthreonine mark. At T3 the chain carries Phosphothreonine. A run of 5 helical transmembrane segments spans residues L57–A81, L122–N143, K166–T188, T243–S263, and W279–S300. E355 is a [CaMn4O5] cluster binding site. The chain crosses the membrane as a helical span at residues R435–P459.

It belongs to the PsbB/PsbC family. PsbC subfamily. PSII is composed of 1 copy each of membrane proteins PsbA, PsbB, PsbC, PsbD, PsbE, PsbF, PsbH, PsbI, PsbJ, PsbK, PsbL, PsbM, PsbT, PsbX, PsbY, PsbZ, Psb30/Ycf12, at least 3 peripheral proteins of the oxygen-evolving complex and a large number of cofactors. It forms dimeric complexes. It depends on Binds multiple chlorophylls and provides some of the ligands for the Ca-4Mn-5O cluster of the oxygen-evolving complex. It may also provide a ligand for a Cl- that is required for oxygen evolution. PSII binds additional chlorophylls, carotenoids and specific lipids. as a cofactor.

The protein localises to the plastid. Its subcellular location is the chloroplast thylakoid membrane. One of the components of the core complex of photosystem II (PSII). It binds chlorophyll and helps catalyze the primary light-induced photochemical processes of PSII. PSII is a light-driven water:plastoquinone oxidoreductase, using light energy to abstract electrons from H(2)O, generating O(2) and a proton gradient subsequently used for ATP formation. This Tetradesmus obliquus (Green alga) protein is Photosystem II CP43 reaction center protein.